Consider the following 270-residue polypeptide: Protein FAM110D (270 aa).

The segment covering 1–16 (MLLASPSTPSRGRTPS) has biased composition (low complexity). Disordered stretches follow at residues 1–83 (MLLA…RPDS), 117–142 (RDVA…PQDA), and 186–244 (PQSW…QVSV). The segment covering 68-78 (RPARRGSGRRL) has biased composition (basic residues).

The protein belongs to the FAM110 family.

In Bos taurus (Bovine), this protein is Protein FAM110D (FAM110D).